The chain runs to 252 residues: Probable transcriptional regulatory protein CE1776 (252 aa).

Residues 1–22 are disordered; the sequence is MAGHSKWATTKHKKAANDAKRG.

The protein belongs to the TACO1 family.

The protein localises to the cytoplasm. This is Probable transcriptional regulatory protein CE1776 from Corynebacterium efficiens (strain DSM 44549 / YS-314 / AJ 12310 / JCM 11189 / NBRC 100395).